A 389-amino-acid chain; its full sequence is Chaperone protein DnaJ (389 aa).

A J domain is found at 5–79; it reads KRDYYEVLGI…RKLYDQFGHE (75 aa). A CR-type zinc finger spans residues 151 to 234; it reads GCNKTIKYER…CRSNKYTVTN (84 aa). Zn(2+)-binding residues include Cys-164, Cys-167, Cys-182, Cys-185, Cys-208, Cys-211, Cys-222, and Cys-225. CXXCXGXG motif repeat units lie at residues 164-171, 182-189, 208-215, and 222-229; these read CHSCNGFG, CKDCNGNG, CSTCNGQG, and CKTCRSNK.

It belongs to the DnaJ family. As to quaternary structure, homodimer. Requires Zn(2+) as cofactor.

It localises to the cytoplasm. Its function is as follows. Participates actively in the response to hyperosmotic and heat shock by preventing the aggregation of stress-denatured proteins and by disaggregating proteins, also in an autonomous, DnaK-independent fashion. Unfolded proteins bind initially to DnaJ; upon interaction with the DnaJ-bound protein, DnaK hydrolyzes its bound ATP, resulting in the formation of a stable complex. GrpE releases ADP from DnaK; ATP binding to DnaK triggers the release of the substrate protein, thus completing the reaction cycle. Several rounds of ATP-dependent interactions between DnaJ, DnaK and GrpE are required for fully efficient folding. Also involved, together with DnaK and GrpE, in the DNA replication of plasmids through activation of initiation proteins. This chain is Chaperone protein DnaJ, found in Mycoplasma genitalium (strain ATCC 33530 / DSM 19775 / NCTC 10195 / G37) (Mycoplasmoides genitalium).